The following is a 354-amino-acid chain: 4-hydroxy-3-methylbut-2-en-1-yl diphosphate synthase (flavodoxin) (354 aa).

[4Fe-4S] cluster-binding residues include Cys-263, Cys-266, Cys-298, and Glu-305.

It belongs to the IspG family. [4Fe-4S] cluster is required as a cofactor.

It catalyses the reaction (2E)-4-hydroxy-3-methylbut-2-enyl diphosphate + oxidized [flavodoxin] + H2O + 2 H(+) = 2-C-methyl-D-erythritol 2,4-cyclic diphosphate + reduced [flavodoxin]. Its pathway is isoprenoid biosynthesis; isopentenyl diphosphate biosynthesis via DXP pathway; isopentenyl diphosphate from 1-deoxy-D-xylulose 5-phosphate: step 5/6. Converts 2C-methyl-D-erythritol 2,4-cyclodiphosphate (ME-2,4cPP) into 1-hydroxy-2-methyl-2-(E)-butenyl 4-diphosphate. The sequence is that of 4-hydroxy-3-methylbut-2-en-1-yl diphosphate synthase (flavodoxin) from Fusobacterium nucleatum subsp. nucleatum (strain ATCC 25586 / DSM 15643 / BCRC 10681 / CIP 101130 / JCM 8532 / KCTC 2640 / LMG 13131 / VPI 4355).